The following is a 712-amino-acid chain: Ribosomal RNA large subunit methyltransferase K/L (712 aa).

The region spanning 43–154 is the THUMP domain; the sequence is LAYRITLWTR…NGQLTISMNF (112 aa).

This sequence belongs to the methyltransferase superfamily. RlmKL family.

It localises to the cytoplasm. It catalyses the reaction guanosine(2445) in 23S rRNA + S-adenosyl-L-methionine = N(2)-methylguanosine(2445) in 23S rRNA + S-adenosyl-L-homocysteine + H(+). The enzyme catalyses guanosine(2069) in 23S rRNA + S-adenosyl-L-methionine = N(2)-methylguanosine(2069) in 23S rRNA + S-adenosyl-L-homocysteine + H(+). Specifically methylates the guanine in position 2445 (m2G2445) and the guanine in position 2069 (m7G2069) of 23S rRNA. This is Ribosomal RNA large subunit methyltransferase K/L from Shewanella frigidimarina (strain NCIMB 400).